Here is a 389-residue protein sequence, read N- to C-terminus: Chalcone synthase (389 aa).

C164 is a catalytic residue.

Belongs to the thiolase-like superfamily. Chalcone/stilbene synthases family.

The enzyme catalyses (E)-4-coumaroyl-CoA + 3 malonyl-CoA + 3 H(+) = 2',4,4',6'-tetrahydroxychalcone + 3 CO2 + 4 CoA. It functions in the pathway secondary metabolite biosynthesis; flavonoid biosynthesis. Functionally, the primary product of this enzyme is 4,2',4',6'-tetrahydroxychalcone (also termed naringenin-chalcone or chalcone) which can under specific conditions spontaneously isomerize into naringenin. This is Chalcone synthase (CHS) from Hydrangea macrophylla (Bigleaf hydrangea).